The chain runs to 428 residues: Flotillin-1 (428 aa).

Residues S19, S163, and S385 each carry the phosphoserine modification. At T387 the chain carries Phosphothreonine.

Belongs to the band 7/mec-2 family. Flotillin subfamily. As to quaternary structure, heterooligomeric complex of flotillin-1 and flotillin-2 and caveolin-1 and caveolin-2. Interacts with ECPAS. High expression in brain, white adipose tissue, heart muscle, skeletal muscle and lung. Low expression in spleen, liver and testis.

The protein resides in the cell membrane. The protein localises to the endosome. It localises to the membrane. Its subcellular location is the caveola. It is found in the melanosome. The protein resides in the membrane raft. In terms of biological role, may act as a scaffolding protein within caveolar membranes, functionally participating in formation of caveolae or caveolae-like vesicles. The chain is Flotillin-1 (Flot1) from Mus musculus (Mouse).